The chain runs to 349 residues: MALTVDVAGPAPWGFRISGGRDFHTPIIVTKVTERGKAEAADLRPGDIIVAINGQSAENMLHAEAQSKIRQSASPLRLQLDRSQTASPGQTNGEGSLEVLATRFQGSLRTHRDSQSSQRSACFSPVSLSPRPCSPFSTPPPTSPVALSKEDMIGCSFQSLTHSPGLAAAHHLTYPGHPTSQQAGHSSPSDSAVRVLLHSPGRPSSPRFSSLDLEEDSEVFKMLQENRQGRAAPRQSSSFRLLQEALEAEERGGTPAFVPSSLSSQASLPTSRALATPPKLHTCEKCSVNISNQAVRIQEGRYRHPGCYTCADCGLNLKMRGHFWVGNELYCEKHARQRYSMPGTLNSRA.

One can recognise a PDZ domain in the interval 1–84 (MALTVDVAGP…PLRLQLDRSQ (84 aa)). The tract at residues 74–147 (SPLRLQLDRS…TPPPTSPVAL (74 aa)) is disordered. Over residues 81–94 (DRSQTASPGQTNGE) the composition is skewed to polar residues. Residues S124, S127, S129, S134, and S137 each carry the phosphoserine modification. 2 positions are modified to phosphothreonine: T138 and T142. Phosphoserine is present on residues S143 and S163. Positions 169–212 (AHHLTYPGHPTSQQAGHSSPSDSAVRVLLHSPGRPSSPRFSSLD) are disordered. The segment covering 178-190 (PTSQQAGHSSPSD) has biased composition (polar residues). Residues S199, S204, S205, S209, S210, and S263 each carry the phosphoserine modification. The span at 199 to 210 (SPGRPSSPRFSS) shows a compositional bias: low complexity. The 61-residue stretch at 281 to 341 (HTCEKCSVNI…EKHARQRYSM (61 aa)) folds into the LIM zinc-binding domain.

As to quaternary structure, interacts with alpha-actinins ACTN1 and ACTN4, FLNA and MYH9. Interacts (via LIM zinc-binding domain) with MKRN2. Highly expressed in lung. Expressed at intermediate level in kidney, testis and spleen. Weakly expressed in heart and brain.

It localises to the cytoplasm. Its subcellular location is the cytoskeleton. Its function is as follows. Probable adapter protein located at the actin cytoskeleton that promotes cell attachment. Necessary for the migratory capacity of epithelial cells. Overexpression enhances cell adhesion to collagen and fibronectin and suppresses anchorage independent growth. May contribute to tumor cell migratory capacity. In Mus musculus (Mouse), this protein is PDZ and LIM domain protein 2 (Pdlim2).